Consider the following 162-residue polypeptide: 2-C-methyl-D-erythritol 2,4-cyclodiphosphate synthase (162 aa).

Positions 12 and 14 each coordinate a divalent metal cation. 4-CDP-2-C-methyl-D-erythritol 2-phosphate contacts are provided by residues 12 to 14 (DVH) and 38 to 39 (HS). His-46 contacts a divalent metal cation. 4-CDP-2-C-methyl-D-erythritol 2-phosphate-binding positions include 60 to 62 (DIG), 65 to 69 (FPDTD), and Arg-146.

It belongs to the IspF family. As to quaternary structure, homotrimer. A divalent metal cation is required as a cofactor.

It catalyses the reaction 4-CDP-2-C-methyl-D-erythritol 2-phosphate = 2-C-methyl-D-erythritol 2,4-cyclic diphosphate + CMP. Its pathway is isoprenoid biosynthesis; isopentenyl diphosphate biosynthesis via DXP pathway; isopentenyl diphosphate from 1-deoxy-D-xylulose 5-phosphate: step 4/6. Involved in the biosynthesis of isopentenyl diphosphate (IPP) and dimethylallyl diphosphate (DMAPP), two major building blocks of isoprenoid compounds. Catalyzes the conversion of 4-diphosphocytidyl-2-C-methyl-D-erythritol 2-phosphate (CDP-ME2P) to 2-C-methyl-D-erythritol 2,4-cyclodiphosphate (ME-CPP) with a corresponding release of cytidine 5-monophosphate (CMP). In Bordetella parapertussis (strain 12822 / ATCC BAA-587 / NCTC 13253), this protein is 2-C-methyl-D-erythritol 2,4-cyclodiphosphate synthase.